The chain runs to 234 residues: LexA repressor (234 aa).

A compositionally biased stretch (basic and acidic residues) spans 1-11; it reads MNEATSHEGPK. A disordered region spans residues 1-34; sequence MNEATSHEGPKRSLPGRPPGIRADSSGLTDRQRR. Residues 52–72 constitute a DNA-binding region (H-T-H motif); sequence MREIGQAVGLSSTSSVAHQLM. Residues 83 to 94 show a composition bias toward basic and acidic residues; it reads DPHRPRAYEVRG. The segment at 83 to 109 is disordered; that stretch reads DPHRPRAYEVRGSDQSSSVQPTDTAGK. Residues 95 to 105 are compositionally biased toward polar residues; that stretch reads SDQSSSVQPTD. Residues serine 158 and lysine 195 each act as for autocatalytic cleavage activity in the active site.

This sequence belongs to the peptidase S24 family. As to quaternary structure, homodimer.

The enzyme catalyses Hydrolysis of Ala-|-Gly bond in repressor LexA.. Represses a number of genes involved in the response to DNA damage (SOS response), including recA and lexA. In the presence of single-stranded DNA, RecA interacts with LexA causing an autocatalytic cleavage which disrupts the DNA-binding part of LexA, leading to derepression of the SOS regulon and eventually DNA repair. In Streptomyces avermitilis (strain ATCC 31267 / DSM 46492 / JCM 5070 / NBRC 14893 / NCIMB 12804 / NRRL 8165 / MA-4680), this protein is LexA repressor.